Consider the following 481-residue polypeptide: MTVRVRIAPSPTGNLHIGTARTAVFNWLFAHHHGGTFVLRVEDTDLERSKPEYTENIKTGLQWLGLHWDEGPFFQTQRLDQYKAAIQTLLDQGLAYRCYCTPAELEAMREQQKANNQAPRYDNRHRNLTEAQRAEFEAQGRKPVIRFKIDDAQQIVWQDLIRGTMTWKGSDLGGDMVIARTPEGDESFGQPLYNLAVVVDDIDMQISHVIRGEDHIANTAKQILLYEALGAAVPQFAHTPLILNQEGRKLSKRDGVTSIDDFRQMGFLPQAIANYMSLLGWTPTDSTQEIFTLEEAAKEFSLERVNKAGAKFDWDKLDWINAQYLHQMPIPALTDLLIPYLQAAGYGDYLGDRPWLESLVALVAPSLTRLADVTQETRLLFGDSITLDEKATAQLQTEGVKVILQEILQNIQASTNFTPDEAKALINQATKAHGVKKGVVMKSMRAGLMGELQGPDLMQSWVLLHQKGWDIERLNQAIASI.

A 'HIGH' region motif is present at residues Pro9 to Thr19. Positions Lys249–Arg253 match the 'KMSKS' region motif. Lys252 lines the ATP pocket.

Belongs to the class-I aminoacyl-tRNA synthetase family. Glutamate--tRNA ligase type 1 subfamily. Monomer.

It localises to the cytoplasm. The enzyme catalyses tRNA(Glu) + L-glutamate + ATP = L-glutamyl-tRNA(Glu) + AMP + diphosphate. Functionally, catalyzes the attachment of glutamate to tRNA(Glu) in a two-step reaction: glutamate is first activated by ATP to form Glu-AMP and then transferred to the acceptor end of tRNA(Glu). The polypeptide is Glutamate--tRNA ligase (Picosynechococcus sp. (strain ATCC 27264 / PCC 7002 / PR-6) (Agmenellum quadruplicatum)).